The primary structure comprises 156 residues: ATP synthase subunit b (156 aa).

The helical transmembrane segment at Leu7–Phe29 threads the bilayer.

This sequence belongs to the ATPase B chain family. F-type ATPases have 2 components, F(1) - the catalytic core - and F(0) - the membrane proton channel. F(1) has five subunits: alpha(3), beta(3), gamma(1), delta(1), epsilon(1). F(0) has three main subunits: a(1), b(2) and c(10-14). The alpha and beta chains form an alternating ring which encloses part of the gamma chain. F(1) is attached to F(0) by a central stalk formed by the gamma and epsilon chains, while a peripheral stalk is formed by the delta and b chains.

The protein resides in the cell inner membrane. F(1)F(0) ATP synthase produces ATP from ADP in the presence of a proton or sodium gradient. F-type ATPases consist of two structural domains, F(1) containing the extramembraneous catalytic core and F(0) containing the membrane proton channel, linked together by a central stalk and a peripheral stalk. During catalysis, ATP synthesis in the catalytic domain of F(1) is coupled via a rotary mechanism of the central stalk subunits to proton translocation. Functionally, component of the F(0) channel, it forms part of the peripheral stalk, linking F(1) to F(0). In Dichelobacter nodosus (strain VCS1703A), this protein is ATP synthase subunit b.